Here is a 227-residue protein sequence, read N- to C-terminus: Cysteine-rich hydrophobic domain-containing protein 1 (227 aa).

The segment at 1–84 (MSILLPNMAE…PPRVVSEEHL (84 aa)) is disordered. Over residues 13–23 (TISELEEEEEA) the composition is skewed to acidic residues. The segment covering 24–44 (ATSSSSPSSSPSSSSSSSVSG) has biased composition (low complexity). Residues 45 to 72 (PDEDEEDEEEEEEEDEEEEDEEEEEEEV) show a composition bias toward acidic residues. Residues 46–73 (DEDEEDEEEEEEEDEEEEDEEEEEEEVP) are a coiled coil.

Belongs to the CHIC family. In terms of processing, palmitoylated. Expressed moderately in the brain.

It localises to the cell membrane. It is found in the cytoplasmic vesicle. This chain is Cysteine-rich hydrophobic domain-containing protein 1 (Chic1), found in Mus musculus (Mouse).